The chain runs to 93 residues: Integration host factor subunit beta (93 aa).

This sequence belongs to the bacterial histone-like protein family. In terms of assembly, heterodimer of an alpha and a beta chain.

This protein is one of the two subunits of integration host factor, a specific DNA-binding protein that functions in genetic recombination as well as in transcriptional and translational control. The chain is Integration host factor subunit beta from Aliivibrio salmonicida (strain LFI1238) (Vibrio salmonicida (strain LFI1238)).